The chain runs to 545 residues: Calcium-dependent protein kinase 10 (545 aa).

A disordered region spans residues 1–36; sequence MGNCNACVRPDSKESKPSSKPKKPNRDRKLNPFAGD. Gly2 is lipidated: N-myristoyl glycine. Positions 63–321 constitute a Protein kinase domain; sequence YILGRELGRG…AQQVLAHPWI (259 aa). Residues 69–77 and Lys92 contribute to the ATP site; that span reads LGRGEFGIT. The Proton acceptor role is filled by Asp187. Ser227 carries the phosphoserine modification. The segment at 327-357 is autoinhibitory domain; sequence APNVPLGDIVRSRLKQFSMMNRFKKKVLRVI. 4 EF-hand domains span residues 364-399, 400-435, 436-471, and 472-507; these read QEVE…VGSQ, LGEP…LQKI, ENDE…ELGE, and PDAS…GTDW. Positions 377, 379, 381, 383, 388, 413, 415, 417, 424, 449, 451, 453, 455, 460, 485, 487, 489, 491, and 496 each coordinate Ca(2+).

It belongs to the protein kinase superfamily. Ser/Thr protein kinase family. CDPK subfamily.

Its subcellular location is the membrane. It catalyses the reaction L-seryl-[protein] + ATP = O-phospho-L-seryl-[protein] + ADP + H(+). The enzyme catalyses L-threonyl-[protein] + ATP = O-phospho-L-threonyl-[protein] + ADP + H(+). With respect to regulation, activated by calcium. Autophosphorylation may play an important role in the regulation of the kinase activity. May play a role in signal transduction pathways that involve calcium as a second messenger. May be a positive regulator controlling stress signal transduction. In Arabidopsis thaliana (Mouse-ear cress), this protein is Calcium-dependent protein kinase 10 (CPK10).